Reading from the N-terminus, the 364-residue chain is 3-isopropylmalate dehydrogenase (364 aa).

79 to 92 (GPKWEHLPAAEQPE) lines the NAD(+) pocket. Residues Arg100, Arg110, Arg139, and Asp228 each coordinate substrate. Positions 228, 252, and 256 each coordinate Mg(2+). 286–298 (GSAPDIAGKDIAN) is an NAD(+) binding site.

Belongs to the isocitrate and isopropylmalate dehydrogenases family. LeuB type 1 subfamily. Homodimer. It depends on Mg(2+) as a cofactor. Mn(2+) serves as cofactor.

It localises to the cytoplasm. It carries out the reaction (2R,3S)-3-isopropylmalate + NAD(+) = 4-methyl-2-oxopentanoate + CO2 + NADH. The protein operates within amino-acid biosynthesis; L-leucine biosynthesis; L-leucine from 3-methyl-2-oxobutanoate: step 3/4. Functionally, catalyzes the oxidation of 3-carboxy-2-hydroxy-4-methylpentanoate (3-isopropylmalate) to 3-carboxy-4-methyl-2-oxopentanoate. The product decarboxylates to 4-methyl-2 oxopentanoate. This chain is 3-isopropylmalate dehydrogenase, found in Sodalis glossinidius (strain morsitans).